We begin with the raw amino-acid sequence, 138 residues long: Actophorin (138 aa).

The ADF-H domain maps to 3-134 (GIQLADEVTS…NLDEVIAKVK (132 aa)).

This sequence belongs to the actin-binding proteins ADF family. As to quaternary structure, interacts with F-actin. Does not interact with G-actin. Interacts with 14-3-3 protein 3.

It is found in the cytoplasm. Its subcellular location is the cytoskeleton. The protein resides in the cell membrane. The protein localises to the cell projection. It localises to the phagocytic cup. It is found in the pseudopodium. Functionally, actin-binding protein that severs actin filaments. The sequence is that of Actophorin from Entamoeba histolytica (strain ATCC 30459 / HM-1:IMSS / ABRM).